Reading from the N-terminus, the 552-residue chain is Chaperonin GroEL (552 aa).

Residues 30 to 33 (TLGP), lysine 51, 87 to 91 (DGTTT), glycine 415, and aspartate 499 contribute to the ATP site.

It belongs to the chaperonin (HSP60) family. As to quaternary structure, forms a cylinder of 14 subunits composed of two heptameric rings stacked back-to-back. Interacts with the co-chaperonin GroES.

The protein resides in the cytoplasm. It carries out the reaction ATP + H2O + a folded polypeptide = ADP + phosphate + an unfolded polypeptide.. Together with its co-chaperonin GroES, plays an essential role in assisting protein folding. The GroEL-GroES system forms a nano-cage that allows encapsulation of the non-native substrate proteins and provides a physical environment optimized to promote and accelerate protein folding. The protein is Chaperonin GroEL of Hamiltonella defensa subsp. Acyrthosiphon pisum (strain 5AT).